A 488-amino-acid polypeptide reads, in one-letter code: Nitrogen metabolite repression protein nmr (488 aa).

A disordered region spans residues Met-1 to Met-45. Positions Ala-14–Arg-29 are enriched in basic and acidic residues. A compositionally biased stretch (polar residues) spans Ser-36–Met-45. Residues Asn-71–Gln-76, Asn-165, Lys-215, and Tyr-237–Asn-240 contribute to the NADP(+) site. NAD(+)-binding positions include Arg-75–Gln-76, Asn-165–Thr-167, Lys-215, and Tyr-237–Asn-240. A dispensable for NMR function region spans residues Glu-412 to Ala-488. Positions Ile-422–Ala-488 are disordered. The span at His-438–Asp-459 shows a compositional bias: low complexity. The span at Ser-460 to Gly-473 shows a compositional bias: acidic residues.

Belongs to the NmrA-type oxidoreductase family. In terms of assembly, interacts with nit-2.

The protein localises to the nucleus. Functionally, may be a redox sensor protein. Negative transcriptional regulator involved in the post-transcriptional modulation of the GATA-type transcription factor nit-2, forming part of a system controlling nitrogen metabolite repression. The chain is Nitrogen metabolite repression protein nmr (nmr) from Neurospora crassa (strain ATCC 24698 / 74-OR23-1A / CBS 708.71 / DSM 1257 / FGSC 987).